The chain runs to 121 residues: Two-component response regulator ORR8 (121 aa).

The region spanning 5–121 (HVLVVDDTHV…VDVPRIMKYI (117 aa)) is the Response regulatory domain. D55 carries the post-translational modification 4-aspartylphosphate.

It belongs to the ARR family. Type-A subfamily. In terms of processing, two-component system major event consists of a His-to-Asp phosphorelay between a sensor histidine kinase (HK) and a response regulator (RR). In plants, the His-to-Asp phosphorelay involves an additional intermediate named Histidine-containing phosphotransfer protein (HPt). This multistep phosphorelay consists of a His-Asp-His-Asp sequential transfer of a phosphate group between first a His and an Asp of the HK protein, followed by the transfer to a conserved His of the HPt protein and finally the transfer to an Asp in the receiver domain of the RR protein. Expressed in mature leaves, and at low levels in roots, shoots and flowers.

Functionally, functions as a response regulator involved in His-to-Asp phosphorelay signal transduction system. Phosphorylation of the Asp residue in the receiver domain activates the ability of the protein to promote the transcription of target genes. Type-A response regulators seem to act as negative regulators of the cytokinin signaling. The chain is Two-component response regulator ORR8 from Oryza sativa subsp. indica (Rice).